We begin with the raw amino-acid sequence, 337 residues long: Anthranilate phosphoribosyltransferase (337 aa).

5-phospho-alpha-D-ribose 1-diphosphate contacts are provided by residues G78, 81–82 (GD), T86, 88–91 (NIST), 106–114 (KHGNRSVSS), and S118. Residue G78 participates in anthranilate binding. S90 contributes to the Mg(2+) binding site. Residue N109 coordinates anthranilate. R164 is an anthranilate binding site. Residues D222 and E223 each coordinate Mg(2+).

The protein belongs to the anthranilate phosphoribosyltransferase family. In terms of assembly, homodimer. The cofactor is Mg(2+).

The enzyme catalyses N-(5-phospho-beta-D-ribosyl)anthranilate + diphosphate = 5-phospho-alpha-D-ribose 1-diphosphate + anthranilate. It functions in the pathway amino-acid biosynthesis; L-tryptophan biosynthesis; L-tryptophan from chorismate: step 2/5. Functionally, catalyzes the transfer of the phosphoribosyl group of 5-phosphorylribose-1-pyrophosphate (PRPP) to anthranilate to yield N-(5'-phosphoribosyl)-anthranilate (PRA). The sequence is that of Anthranilate phosphoribosyltransferase from Idiomarina loihiensis (strain ATCC BAA-735 / DSM 15497 / L2-TR).